Consider the following 1391-residue polypeptide: DNA-directed RNA polymerase subunit beta' (1391 aa).

Residues C72, C74, C87, and C90 each coordinate Zn(2+). Positions 462, 464, and 466 each coordinate Mg(2+). C816, C890, C897, and C900 together coordinate Zn(2+).

Belongs to the RNA polymerase beta' chain family. The RNAP catalytic core consists of 2 alpha, 1 beta, 1 beta' and 1 omega subunit. When a sigma factor is associated with the core the holoenzyme is formed, which can initiate transcription. It depends on Mg(2+) as a cofactor. Zn(2+) serves as cofactor.

The enzyme catalyses RNA(n) + a ribonucleoside 5'-triphosphate = RNA(n+1) + diphosphate. DNA-dependent RNA polymerase catalyzes the transcription of DNA into RNA using the four ribonucleoside triphosphates as substrates. The chain is DNA-directed RNA polymerase subunit beta' from Neisseria meningitidis serogroup A / serotype 4A (strain DSM 15465 / Z2491).